Consider the following 81-residue polypeptide: Photosystem I iron-sulfur center (81 aa).

4Fe-4S ferredoxin-type domains lie at 2-31 (SHSV…MIPW) and 39-68 (IASA…VRVY). Cys11, Cys14, Cys17, Cys21, Cys48, Cys51, Cys54, and Cys58 together coordinate [4Fe-4S] cluster.

In terms of assembly, the eukaryotic PSI reaction center is composed of at least 11 subunits. [4Fe-4S] cluster serves as cofactor.

Its subcellular location is the plastid. It is found in the chloroplast thylakoid membrane. The catalysed reaction is reduced [plastocyanin] + hnu + oxidized [2Fe-2S]-[ferredoxin] = oxidized [plastocyanin] + reduced [2Fe-2S]-[ferredoxin]. Functionally, apoprotein for the two 4Fe-4S centers FA and FB of photosystem I (PSI); essential for photochemical activity. FB is the terminal electron acceptor of PSI, donating electrons to ferredoxin. The C-terminus interacts with PsaA/B/D and helps assemble the protein into the PSI complex. Required for binding of PsaD and PsaE to PSI. PSI is a plastocyanin-ferredoxin oxidoreductase, converting photonic excitation into a charge separation, which transfers an electron from the donor P700 chlorophyll pair to the spectroscopically characterized acceptors A0, A1, FX, FA and FB in turn. In Phaseolus vulgaris (Kidney bean), this protein is Photosystem I iron-sulfur center.